A 279-amino-acid polypeptide reads, in one-letter code: Pantothenate synthetase (279 aa).

ATP is bound at residue 31–38 (MGALHEGH). Catalysis depends on His-38, which acts as the Proton donor. A (R)-pantoate-binding site is contributed by Gln-62. Position 62 (Gln-62) interacts with beta-alanine. Residue 148-151 (GEKD) participates in ATP binding. Gln-154 is a (R)-pantoate binding site. ATP contacts are provided by residues Val-177 and 185 to 188 (LSSR).

The protein belongs to the pantothenate synthetase family. As to quaternary structure, homodimer.

It localises to the cytoplasm. The enzyme catalyses (R)-pantoate + beta-alanine + ATP = (R)-pantothenate + AMP + diphosphate + H(+). Its pathway is cofactor biosynthesis; (R)-pantothenate biosynthesis; (R)-pantothenate from (R)-pantoate and beta-alanine: step 1/1. Functionally, catalyzes the condensation of pantoate with beta-alanine in an ATP-dependent reaction via a pantoyl-adenylate intermediate. The polypeptide is Pantothenate synthetase (Cereibacter sphaeroides (strain ATCC 17029 / ATH 2.4.9) (Rhodobacter sphaeroides)).